The primary structure comprises 429 residues: Saccharopine dehydrogenase-like oxidoreductase (429 aa).

The residue at position 2 (Ala2) is an N-acetylalanine. Phosphoserine is present on residues Ser209, Ser215, and Ser217.

The protein belongs to the saccharopine dehydrogenase family.

This is Saccharopine dehydrogenase-like oxidoreductase (Sccpdh) from Mus musculus (Mouse).